The chain runs to 344 residues: Hydrophobic dipeptide epimerase (344 aa).

Residues Thr126 and 151-153 (KIK) each bind substrate. Asp184, Glu210, and Asp235 together coordinate Mg(2+). Substrate-binding positions include Lys257 and 307–309 (DLD).

The protein belongs to the mandelate racemase/muconate lactonizing enzyme family. Requires Mg(2+) as cofactor.

Its function is as follows. Dipeptide epimerase with a preference for hydrophobic substrates. Catalyzes the epimerization of L-Ala-L-Thr, L-Ala-L-Met, L-Ala-L-His, L-Ala-L-Phe, L-Ala-L-Tyr, L-Ala-L-Trp, L-Ile-L-Ala, L-Ile-L-Ser, L-Ile-L-Met, L-Ile-L-His, L-Ile-L-Phe, L-Ile-L-Tyr, L-Ile-L-Trp, L-Phe-L-Met, L-Phe-L-His, L-Phe-L-Phe, L-Phe-L-Tyr, L-Phe-L-Trp, L-Phe-L-Ser, L-Phe-L-Thr and L-Phe-L-Lys (in vitro). The protein is Hydrophobic dipeptide epimerase of Roseobacter litoralis (strain ATCC 49566 / DSM 6996 / JCM 21268 / NBRC 15278 / OCh 149).